A 357-amino-acid chain; its full sequence is Nitronate monooxygenase npaC (357 aa).

Q167, G172, and G206 together coordinate FMN.

The protein belongs to the nitronate monooxygenase family. NMO class I subfamily. Requires FMN as cofactor.

Nitronate monooxygenase; part of the gene cluster that mediates the biosynthesis of the deadly neurotoxic nitroalkane 3-nitropropanoic acid (3-NPA) that acts as an antimetabolite of succinate and irreversibly inhibits succinate dehydrogenase and disrupts mitochondrial oxidative phosphorylation. Catalyzes the oxidation of 3-NPA to nitrite and malonic semialdehyde. NpaC is not conserved in all fungal npa clusters and, while it is possible that it serves as a self-protection mechanism against accumulation of 3-NPA (by npaA and npaB) in the producing host, the more likely scenario may be the three enzymes representing an alternative catabolic pathway of aspartate to generate readily metabolizable nitrogen and carbon sources. The polypeptide is Nitronate monooxygenase npaC (Metarhizium robertsii (strain ARSEF 23 / ATCC MYA-3075) (Metarhizium anisopliae (strain ARSEF 23))).